The following is a 412-amino-acid chain: Isocitrate dehydrogenase [NADP] cytoplasmic (412 aa).

Residues 76–78 (TIT) and Arg83 contribute to the NADP(+) site. Substrate is bound at residue Thr78. Substrate contacts are provided by residues 95 to 101 (SPNGTIR), Arg110, and Arg133. Asp253 provides a ligand contact to Mn(2+). Residue Lys261 participates in NADP(+) binding. Asp276 provides a ligand contact to Mn(2+). Residues 309-314 (GTVTRH) and Asn327 contribute to the NADP(+) site.

The protein belongs to the isocitrate and isopropylmalate dehydrogenases family. As to quaternary structure, homodimer. Mg(2+) serves as cofactor. Requires Mn(2+) as cofactor.

Its subcellular location is the cytoplasm. The enzyme catalyses D-threo-isocitrate + NADP(+) = 2-oxoglutarate + CO2 + NADPH. This is Isocitrate dehydrogenase [NADP] cytoplasmic (idhC) from Dictyostelium discoideum (Social amoeba).